We begin with the raw amino-acid sequence, 668 residues long: tRNA 5-methylaminomethyl-2-thiouridine biosynthesis bifunctional protein MnmC (668 aa).

Positions 1-245 (MKHYSIQPAN…KREMLCGVME (245 aa)) are tRNA (mnm(5)s(2)U34)-methyltransferase. Residues 270–668 (IGGGIASALL…LLKGKAVKAG (399 aa)) are FAD-dependent cmnm(5)s(2)U34 oxidoreductase.

This sequence in the N-terminal section; belongs to the methyltransferase superfamily. tRNA (mnm(5)s(2)U34)-methyltransferase family. The protein in the C-terminal section; belongs to the DAO family. FAD is required as a cofactor.

It localises to the cytoplasm. The enzyme catalyses 5-aminomethyl-2-thiouridine(34) in tRNA + S-adenosyl-L-methionine = 5-methylaminomethyl-2-thiouridine(34) in tRNA + S-adenosyl-L-homocysteine + H(+). Functionally, catalyzes the last two steps in the biosynthesis of 5-methylaminomethyl-2-thiouridine (mnm(5)s(2)U) at the wobble position (U34) in tRNA. Catalyzes the FAD-dependent demodification of cmnm(5)s(2)U34 to nm(5)s(2)U34, followed by the transfer of a methyl group from S-adenosyl-L-methionine to nm(5)s(2)U34, to form mnm(5)s(2)U34. The chain is tRNA 5-methylaminomethyl-2-thiouridine biosynthesis bifunctional protein MnmC from Escherichia coli (strain UTI89 / UPEC).